Reading from the N-terminus, the 203-residue chain is Recombination protein RecR (203 aa).

The C4-type zinc-finger motif lies at 57 to 73; it reads CQSCGTLKSNSLGCNNC. A Toprim domain is found at 81–175; sequence NKICVVEDIA…KVTKLAQGLP (95 aa).

It belongs to the RecR family.

Its function is as follows. May play a role in DNA repair. It seems to be involved in an RecBC-independent recombinational process of DNA repair. It may act with RecF and RecO. This chain is Recombination protein RecR, found in Pelagibacter ubique (strain HTCC1062).